A 683-amino-acid polypeptide reads, in one-letter code: MSTNSRQILVTCALPYANGPIHLGHMLEHIQADIWVRFQRMRGNEIYFVCADDAHGTPIMLKADQMGVKPEQLIADVQQKHMADFNGFNISFDNYHSTHSDENRELVEAIYHKLTQNGFIKTRTISQLFDPEKAMFLPDRFVKGTCPKCKAEDQYGDNCEVCSATYSPIELISPRSTVSGATPVLKESEHFFFDLPAFGAMLTEWIRSGSLQQEVANKMQEWFEAGLQQWDISRDAPYFGFKIPNTDNKYFYVWLDAPIGYMASFKNLCGKKSGIDFDSFWSKESHAELYHFIGKDIMYFHSLFWPAMLDGASLRKPNNIFVHGYVTVNGEKMSKSRGTFIQAATYLKYLDPECLRYYYAAKLGSRIDDLDLNLDDFVQRVNTDLVNKLVNLASRNASFIQKRFDGKLANKLDDKMLFDEFIAQSELIADYYENREFGKAIREIMALTDKANKYVDEKAPWVIAKDESRTDELQQVCSMGIELFRVLIGYLKPVLPNLAARAEAFLNTQLTWENVASPLLDHQIAPFKPLFSRLDMKKIEEMIEASKIENAKANQTAGKSAVENKAFSEFEPIEESITIDDFCKVDLRVAKVLKCEAVPESNKLLKFILDIGNETRQVFSGIKAAYGKPEDLEGRFVIMVANLAPRKMKFGMSEGMILSAGNGGADLYLLDVDAGAKAGQRVK.

Positions 15 to 25 match the 'HIGH' region motif; it reads PYANGPIHLGH. Cysteine 146, cysteine 149, cysteine 159, and cysteine 162 together coordinate Zn(2+). A 'KMSKS' region motif is present at residues 332–336; sequence KMSKS. Lysine 335 contributes to the ATP binding site. One can recognise a tRNA-binding domain in the interval 581-683; the sequence is DFCKVDLRVA…AGAKAGQRVK (103 aa).

It belongs to the class-I aminoacyl-tRNA synthetase family. MetG type 1 subfamily. As to quaternary structure, homodimer. It depends on Zn(2+) as a cofactor.

The protein resides in the cytoplasm. The catalysed reaction is tRNA(Met) + L-methionine + ATP = L-methionyl-tRNA(Met) + AMP + diphosphate. Its function is as follows. Is required not only for elongation of protein synthesis but also for the initiation of all mRNA translation through initiator tRNA(fMet) aminoacylation. The protein is Methionine--tRNA ligase of Histophilus somni (strain 2336) (Haemophilus somnus).